Reading from the N-terminus, the 190-residue chain is Elongation factor P-like protein (190 aa).

Belongs to the elongation factor P family.

This chain is Elongation factor P-like protein, found in Erwinia tasmaniensis (strain DSM 17950 / CFBP 7177 / CIP 109463 / NCPPB 4357 / Et1/99).